A 283-amino-acid polypeptide reads, in one-letter code: Pantothenate synthetase (283 aa).

30–37 serves as a coordination point for ATP; that stretch reads MGALHEGH. Histidine 37 serves as the catalytic Proton donor. Glutamine 61 serves as a coordination point for (R)-pantoate. Position 61 (glutamine 61) interacts with beta-alanine. 147-150 is a binding site for ATP; sequence GEKD. A (R)-pantoate-binding site is contributed by glutamine 153. ATP-binding positions include valine 176 and 184–187; that span reads VSSR.

It belongs to the pantothenate synthetase family. In terms of assembly, homodimer.

It is found in the cytoplasm. It carries out the reaction (R)-pantoate + beta-alanine + ATP = (R)-pantothenate + AMP + diphosphate + H(+). It functions in the pathway cofactor biosynthesis; (R)-pantothenate biosynthesis; (R)-pantothenate from (R)-pantoate and beta-alanine: step 1/1. Catalyzes the condensation of pantoate with beta-alanine in an ATP-dependent reaction via a pantoyl-adenylate intermediate. This chain is Pantothenate synthetase, found in Chlorobium luteolum (strain DSM 273 / BCRC 81028 / 2530) (Pelodictyon luteolum).